Here is a 677-residue protein sequence, read N- to C-terminus: DNA ligase (677 aa).

NAD(+) contacts are provided by residues 34–38, 83–84, and Glu115; these read DLAFD and SL. Lys117 serves as the catalytic N6-AMP-lysine intermediate. Arg138, Glu180, Lys297, and Lys321 together coordinate NAD(+). Residues Cys416, Cys419, Cys434, and Cys439 each coordinate Zn(2+). Residues 596 to 677 form the BRCT domain; the sequence is KKTSQLAGLT…LIKMLETEQA (82 aa).

Belongs to the NAD-dependent DNA ligase family. LigA subfamily. It depends on Mg(2+) as a cofactor. The cofactor is Mn(2+).

It carries out the reaction NAD(+) + (deoxyribonucleotide)n-3'-hydroxyl + 5'-phospho-(deoxyribonucleotide)m = (deoxyribonucleotide)n+m + AMP + beta-nicotinamide D-nucleotide.. In terms of biological role, DNA ligase that catalyzes the formation of phosphodiester linkages between 5'-phosphoryl and 3'-hydroxyl groups in double-stranded DNA using NAD as a coenzyme and as the energy source for the reaction. It is essential for DNA replication and repair of damaged DNA. In Acidobacterium capsulatum (strain ATCC 51196 / DSM 11244 / BCRC 80197 / JCM 7670 / NBRC 15755 / NCIMB 13165 / 161), this protein is DNA ligase.